A 790-amino-acid polypeptide reads, in one-letter code: Polyribonucleotide nucleotidyltransferase (790 aa).

Residues Asp498 and Asp504 each contribute to the Mg(2+) site. The region spanning 565 to 624 (PRILRIKIKPEQIGEVIGPGGRVIRAIQEQTGTKISIEEDGTVFISAANEDAARRAVREI) is the KH domain. The S1 motif domain maps to 634 to 702 (GEIFYGRVVT…PDGKINLSRK (69 aa)). Residues 710-790 (AERAATAQAP…KELLGEDEPN (81 aa)) form a disordered region. The span at 739-755 (PERRPGPPTPRRPEQRG) shows a compositional bias: basic and acidic residues. Residues 757–772 (SRPPRPQAQRSTPPPG) are compositionally biased toward pro residues.

The protein belongs to the polyribonucleotide nucleotidyltransferase family. Mg(2+) is required as a cofactor.

It localises to the cytoplasm. The enzyme catalyses RNA(n+1) + phosphate = RNA(n) + a ribonucleoside 5'-diphosphate. In terms of biological role, involved in mRNA degradation. Catalyzes the phosphorolysis of single-stranded polyribonucleotides processively in the 3'- to 5'-direction. The sequence is that of Polyribonucleotide nucleotidyltransferase from Thermomicrobium roseum (strain ATCC 27502 / DSM 5159 / P-2).